The primary structure comprises 660 residues: Bifunctional polymyxin resistance protein ArnA (660 aa).

Residues 1–304 are formyltransferase ArnAFT; the sequence is MKAVIFAYHD…TLGLVAGARL (304 aa). Residue His104 is the Proton donor; for formyltransferase activity of the active site. (6R)-10-formyltetrahydrofolate-binding positions include Arg114 and 136-140; that span reads VKRAD. The dehydrogenase ArnADH stretch occupies residues 314–660; the sequence is RRIRVLILGV…RSVDVAERAS (347 aa). Residues Asp347 and 368 to 369 each bind NAD(+); that span reads DI. UDP-alpha-D-glucuronate-binding positions include Ala393, Tyr398, and 432–433; that span reads TS. The active-site Proton acceptor; for decarboxylase activity is Glu434. UDP-alpha-D-glucuronate contacts are provided by residues Arg460, Asn492, 526 to 535, and Tyr613; that span reads KLIDGGQQKR. Arg619 (proton donor; for decarboxylase activity) is an active-site residue.

The protein in the N-terminal section; belongs to the Fmt family. UDP-L-Ara4N formyltransferase subfamily. This sequence in the C-terminal section; belongs to the NAD(P)-dependent epimerase/dehydratase family. UDP-glucuronic acid decarboxylase subfamily. As to quaternary structure, homohexamer, formed by a dimer of trimers.

The enzyme catalyses UDP-alpha-D-glucuronate + NAD(+) = UDP-beta-L-threo-pentopyranos-4-ulose + CO2 + NADH. It carries out the reaction UDP-4-amino-4-deoxy-beta-L-arabinose + (6R)-10-formyltetrahydrofolate = UDP-4-deoxy-4-formamido-beta-L-arabinose + (6S)-5,6,7,8-tetrahydrofolate + H(+). It participates in nucleotide-sugar biosynthesis; UDP-4-deoxy-4-formamido-beta-L-arabinose biosynthesis; UDP-4-deoxy-4-formamido-beta-L-arabinose from UDP-alpha-D-glucuronate: step 1/3. Its pathway is nucleotide-sugar biosynthesis; UDP-4-deoxy-4-formamido-beta-L-arabinose biosynthesis; UDP-4-deoxy-4-formamido-beta-L-arabinose from UDP-alpha-D-glucuronate: step 3/3. The protein operates within bacterial outer membrane biogenesis; lipopolysaccharide biosynthesis. Its function is as follows. Bifunctional enzyme that catalyzes the oxidative decarboxylation of UDP-glucuronic acid (UDP-GlcUA) to UDP-4-keto-arabinose (UDP-Ara4O) and the addition of a formyl group to UDP-4-amino-4-deoxy-L-arabinose (UDP-L-Ara4N) to form UDP-L-4-formamido-arabinose (UDP-L-Ara4FN). The modified arabinose is attached to lipid A and is required for resistance to polymyxin and cationic antimicrobial peptides. The polypeptide is Bifunctional polymyxin resistance protein ArnA (Salmonella dublin (strain CT_02021853)).